Here is a 458-residue protein sequence, read N- to C-terminus: Siroheme synthase (458 aa).

The tract at residues 1–203 (MDYLPLFFDL…GNLAAAEQLI (203 aa)) is precorrin-2 dehydrogenase /sirohydrochlorin ferrochelatase. NAD(+) is bound by residues 22 to 23 (TI) and 43 to 44 (PK). The residue at position 128 (Ser128) is a Phosphoserine. The uroporphyrinogen-III C-methyltransferase stretch occupies residues 216-458 (GEVYLVGAGP…RCHEKLNWYK (243 aa)). Pro225 provides a ligand contact to S-adenosyl-L-methionine. Asp248 acts as the Proton acceptor in catalysis. The active-site Proton donor is the Lys270. S-adenosyl-L-methionine-binding positions include 301–303 (GGD), Ile306, 331–332 (TA), Met383, and Gly412.

In the N-terminal section; belongs to the precorrin-2 dehydrogenase / sirohydrochlorin ferrochelatase family. This sequence in the C-terminal section; belongs to the precorrin methyltransferase family.

It catalyses the reaction uroporphyrinogen III + 2 S-adenosyl-L-methionine = precorrin-2 + 2 S-adenosyl-L-homocysteine + H(+). It carries out the reaction precorrin-2 + NAD(+) = sirohydrochlorin + NADH + 2 H(+). The catalysed reaction is siroheme + 2 H(+) = sirohydrochlorin + Fe(2+). It participates in cofactor biosynthesis; adenosylcobalamin biosynthesis; precorrin-2 from uroporphyrinogen III: step 1/1. It functions in the pathway cofactor biosynthesis; adenosylcobalamin biosynthesis; sirohydrochlorin from precorrin-2: step 1/1. The protein operates within porphyrin-containing compound metabolism; siroheme biosynthesis; precorrin-2 from uroporphyrinogen III: step 1/1. Its pathway is porphyrin-containing compound metabolism; siroheme biosynthesis; siroheme from sirohydrochlorin: step 1/1. It participates in porphyrin-containing compound metabolism; siroheme biosynthesis; sirohydrochlorin from precorrin-2: step 1/1. Functionally, multifunctional enzyme that catalyzes the SAM-dependent methylations of uroporphyrinogen III at position C-2 and C-7 to form precorrin-2 via precorrin-1. Then it catalyzes the NAD-dependent ring dehydrogenation of precorrin-2 to yield sirohydrochlorin. Finally, it catalyzes the ferrochelation of sirohydrochlorin to yield siroheme. This is Siroheme synthase from Saccharophagus degradans (strain 2-40 / ATCC 43961 / DSM 17024).